We begin with the raw amino-acid sequence, 305 residues long: Alpha-N-acetylgalactosaminide alpha-2,6-sialyltransferase 3 (305 aa).

Residues 1–8 lie on the Cytoplasmic side of the membrane; sequence MACILKRK. The chain crosses the membrane as a helical; Signal-anchor for type II membrane protein span at residues 9–28; that stretch reads SVIAVSFIAAFLFLLVVRLV. Residues 29–305 lie on the Lumenal side of the membrane; sequence NEVNFPLLLN…IFTHPNWTLS (277 aa). Cys80 and Cys229 are oxidised to a cystine. Asn148, Asn239, and Asn301 each carry an N-linked (GlcNAc...) asparagine glycan.

Belongs to the glycosyltransferase 29 family. In terms of tissue distribution, expressed in brain and kidney. Observed in the epithelium of the proximal tubules, marginal expression was also found in the distal tubules and collecting tubules.

It localises to the golgi apparatus membrane. It catalyses the reaction an alpha-Neu5Ac-(2-&gt;3)-beta-D-Gal-(1-&gt;3)-D-GlcNAc derivative + CMP-N-acetyl-beta-neuraminate = an alpha-Neu5Ac-(2-&gt;3)-beta-D-Gal-(1-&gt;3)-[alpha-Neu5Ac-(2-&gt;6)]-D-GlcNAc derivative + CMP + H(+). The enzyme catalyses a ganglioside GM1b (d18:1(4E)) + CMP-N-acetyl-beta-neuraminate = a ganglioside GD1alpha (d18:1(4E)) + CMP + H(+). It carries out the reaction a globoside MSGG + CMP-N-acetyl-beta-neuraminate = a globoside DSGG + CMP + H(+). The catalysed reaction is 3-O-[alpha-Neu5Ac-(2-&gt;3)-beta-D-Gal-(1-&gt;3)-alpha-D-GalNAc]-L-Ser-[protein] + CMP-N-acetyl-beta-neuraminate = a 3-O-{alpha-Neu5Ac-(2-&gt;3)-beta-D-Gal-(1-&gt;3)-[alpha-Neu5Ac-(2-&gt;6)]-alpha-D-GalNAc}-L-seryl-[protein] + CMP + H(+). It catalyses the reaction 3-O-[alpha-Neu5Ac-(2-&gt;3)-beta-D-Gal-(1-&gt;3)-alpha-D-GalNAc]-L-Thr-[protein] + CMP-N-acetyl-beta-neuraminate = a 3-O-{alpha-Neu5Ac-(2-&gt;3)-beta-D-Gal-(1-&gt;3)-[alpha-Neu5Ac-(2-&gt;6)]-alpha-D-GalNAc}-L-threonyl-[protein] + CMP + H(+). It functions in the pathway protein modification; protein glycosylation. Its pathway is glycolipid biosynthesis. In terms of biological role, transfers the sialyl group (N-acetyl-alpha-neuraminyl or NeuAc) from CMP-NeuAc to the GalNAc residue on the NeuAc-alpha-2,3-Gal-beta-1,3-GalNAc sequence of glycoproteins and glycolipids forming an alpha-2,6-linkage. Produces branched type disialyl structures by transfer of a sialyl group onto a GalNAc residue inside the backbone core chains. ST6GalNAcIII prefers glycolipids to glycoproteins, predominantly catalyzing the biosynthesis of ganglioside GD1alpha from GM1b. GD1alpha is a critical molecule in the communication and interaction between neuronal cells and their supportive cells, particularly in brain tissues, and functions as an adhesion molecule in the process of metastasis. Sialylation of glycoproteins or glycosphingolipids is very important in tumor development, neuronal development, nerve repair, immunological processes and regulation of hormone sensitivity. The chain is Alpha-N-acetylgalactosaminide alpha-2,6-sialyltransferase 3 (ST6GALNAC3) from Homo sapiens (Human).